A 219-amino-acid chain; its full sequence is Transmembrane emp24 domain-containing protein 10 (219 aa).

Residues 1-31 (MSGSSGPLSWPGPRPCALLFLLLLGPSSVLA) form the signal peptide. The interval 1-142 (MSGSSGPLSW…KNYEEIAKVE (142 aa)) is required for interaction with STX17. The Lumenal segment spans residues 32–185 (ISFHLPVNSR…RDTNESTNTR (154 aa)). Residues 41–193 (RKCLREEIHK…TRVLYFSIFS (153 aa)) form the GOLD domain. The segment at 147–178 (LEVELRRLEDLSESIVNDFAYMKKREEEMRDT) is required for TMED10 and TMED2 cis-Golgi network localization. Arg171 and Arg176 each carry dimethylated arginine. An N-linked (GlcNAc...) asparagine glycan is attached at Asn179. A helical membrane pass occupies residues 186–206 (VLYFSIFSMLCLIGLATWQVF). The interaction with COPG1 stretch occupies residues 204 to 219 (QVFYLRRFFKAKKLIE). At 207–219 (YLRRFFKAKKLIE) the chain is on the cytoplasmic side. Residues 207–219 (YLRRFFKAKKLIE) are interaction with ARF1 and IL1B. Positions 211 to 212 (FF) match the COPII vesicle coat-binding motif. The short motif at 211–219 (FFKAKKLIE) is the COPI vesicle coat-binding element.

The protein belongs to the EMP24/GP25L family. In terms of assembly, predominantly dimeric and to a lesser extent monomeric in the ER. Monomer and dimer in ERGIC and cis-Golgi network. Forms homooligomer (via GOLD domain); the assembly is promoted by direct binding with leaderless cargos and may form a protein channel that facilitates cargo entry into the ERGIC. Forms heterooligomeric complexes with other members of the p24 family such as TMED2, TMED7 and TMED9. Interacts (via GOLD domain) with TMED2 (via GOLD domain); the complex is required for export of TMED10 from the ER to the cis-Golgi network; the complex is proposed to be involved in cis-Golgi network dynamics and / or biogenesis. Associates with the COPI vesicle coat subunits (coatomer). Tetramerization of the cytoplasmic domain at the Golgi membrane in vitro; the complex is proposed to interact with COPI coatomer and induce budding of the vesicles. Interacts with COPG1; the interaction involves TMED10 homodimer. Interacts with ARF1 (GDP-bound); the interaction probably involves a TMED10 oligomer. Interacts with SEC23A, SEC24B, SEC24C and SEC24D components of the coat protein complex II/COPII, indicative of an association of TMED10 with the COPII vesicle coat. Interacts with CD59. Interacts with MPPE1/PGAP5; the complex might recruit and sort GPI-anchored proteins to the ER-exit site, or the interaction might lead to recycling of PGAP5 between the ER and the Golgi. Interacts with F2LR1/PAR2. Interacts with KDELR2/ERD2; the interaction is disrupted by KDELR2 ligand. Found in a complex composed at least of SURF4, TMED2 and TMED10. Associates with the presenilin-dependent gamma-secretase complex. Interacts with STX17; the interaction is direct. Interacts with IL-1; the interaction is direct. Interacts with RAB21 (active GTP-bound form); the interaction is indirect and regulates TMED10 abundance and localization at the Golgi.

Its subcellular location is the endoplasmic reticulum membrane. The protein localises to the endoplasmic reticulum-Golgi intermediate compartment membrane. It localises to the golgi apparatus membrane. The protein resides in the golgi apparatus. It is found in the cis-Golgi network membrane. Its subcellular location is the trans-Golgi network membrane. The protein localises to the cytoplasmic vesicle. It localises to the secretory vesicle membrane. The protein resides in the cell membrane. It is found in the melanosome. In terms of biological role, cargo receptor involved in protein vesicular trafficking and quality control in the endoplasmic reticulum (ER) and Golgi. The p24 protein family is a group of transmembrane proteins that bind coat protein complex I/COPI and coat protein complex II/COPII involved in vesicular trafficking between the membranes. Acts at the lumenal side for incorporation of secretory cargo molecules into transport vesicles and involved in vesicle coat formation at the cytoplasmic side. Mainly functions in the early secretory pathway and cycles between the ER, ER-Golgi intermediate compartment (ERGIC) and Golgi, mediating cargo transport through COPI and COPII-coated vesicles. In COPII vesicle-mediated anterograde transport, involved in the transport of GPI-anchored proteins by acting together with TMED2 as their cargo receptor; the function specifically implies SEC24C and SEC24D of the COPII vesicle coat and lipid raft-like microdomains of the ER. Recognizes GPI anchors structural remodeled in the ER by the GPI inositol-deacylase/PGAP1 and the metallophosphoesterase MPPE1/PGAP5. In COPI vesicle-mediated retrograde transport, involved in the biogenesis of COPI vesicles and vesicle coat recruitment. Involved in trafficking of amyloid beta A4 protein and soluble APP-beta release (independent from the modulation of gamma-secretase activity). Involved in the KDELR2-mediated retrograde transport of the toxin A subunit (CTX-A-K63)together with COPI and the COOH terminus of KDELR2. On Golgi membranes, acts as a primary receptor for ARF1-GDP, a GTP-binding protein involved in COPI-vesicle formation. Increases coatomer-dependent GTPase-activating activity of ARFGAP2 which mediates the hydrolysis of ARF1-bound GTP and therefore modulates protein trafficking from the Golgi apparatus. Involved in the exocytic trafficking of G protein-coupled receptors F2LR1/PAR2 (trypsin and tryspin-like enzyme receptor), OPRM1 (opioid receptor) and P2RY4 (UTD and UDP receptor) from the Golgi to the plasma membrane, thus contributing to receptor resensitization. In addition to its cargo receptor activity, may also act as a protein channel after oligomerization, facilitating the post-translational entry of leaderless cytoplasmic cargo into the ERGIC. Involved in the translocation into ERGIC, the vesicle entry and the secretion of leaderless cargos (lacking the secretion signal sequence), including the mature form of interleukin 1/IL-1 family members, the alpha-crystallin B chain HSPB5, the carbohydrate-binding proteins galectin-1/LGALS1 and galectin-3/LGALS3, the microtubule-associated protein Tau/MAPT, and the annexin A1/ANXA1; the translocation process is dependent on cargo protein unfolding and enhanced by chaperones HSP90AB1 and HSP90B1/GRP9. Could also associates with the presenilin-dependent gamma-secretase complex in order to regulate gamma-cleavages of the amyloid beta A4 protein to yield amyloid-beta 40/Abeta40. The protein is Transmembrane emp24 domain-containing protein 10 (TMED10) of Mesocricetus auratus (Golden hamster).